A 415-amino-acid polypeptide reads, in one-letter code: Beta-1,4-glucuronyltransferase 1 (415 aa).

Residues 1–8 are Cytoplasmic-facing; sequence MQMSYAIR. The helical; Signal-anchor for type II membrane protein transmembrane segment at 9 to 36 threads the bilayer; that stretch reads CAFYQLLLAALMLVAMLQLLYLSLLSGL. Residues 37 to 415 lie on the Lumenal side of the membrane; sequence HGQEEQDQYF…AKYPDSPRHC (379 aa). An N-linked (GlcNAc...) asparagine glycan is attached at N204. Mn(2+)-binding residues include D227 and D229. N300 carries an N-linked (GlcNAc...) asparagine glycan.

This sequence belongs to the glycosyltransferase 49 family. In terms of assembly, interacts with LARGE1 and LARGE2. Requires Mn(2+) as cofactor.

The protein localises to the golgi apparatus membrane. It catalyses the reaction 3-O-[beta-D-Xyl-(1-&gt;4)-Rib-ol-P-Rib-ol-P-3-beta-D-GalNAc-(1-&gt;3)-beta-D-GlcNAc-(1-&gt;4)-(O-6-P-alpha-D-Man)]-Thr-[protein] + UDP-alpha-D-glucuronate = 3-O-[beta-D-GlcA-(1-&gt;3)-beta-D-Xyl-(1-&gt;4)-Rib-ol-P-Rib-ol-P-3-beta-D-GalNAc-(1-&gt;3)-beta-D-GlcNAc-(1-&gt;4)-(O-6-P-alpha-D-Man)]-Thr-[protein] + UDP + H(+). It functions in the pathway protein modification; protein glycosylation. Beta-1,4-glucuronyltransferase involved in O-mannosylation of alpha-dystroglycan (DAG1). Transfers a glucuronic acid (GlcA) residue onto a xylose (Xyl) acceptor to produce the glucuronyl-beta-1,4-xylose-beta disaccharide primer, which is further elongated by LARGE1, during synthesis of phosphorylated O-mannosyl glycan. Phosphorylated O-mannosyl glycan is a carbohydrate structure present in alpha-dystroglycan (DAG1), which is required for binding laminin G-like domain-containing extracellular proteins with high affinity. Required for axon guidance; via its function in O-mannosylation of alpha-dystroglycan (DAG1). The protein is Beta-1,4-glucuronyltransferase 1 of Bos taurus (Bovine).